A 321-amino-acid polypeptide reads, in one-letter code: Leucine-rich repeat-containing protein 46 (321 aa).

4 LRR repeats span residues 45 to 66 (ELQT…EGLQ), 67 to 88 (NLHS…ACIP), 89 to 110 (SLRF…LDLP), and 111 to 132 (CLQF…EFPQ). In terms of domain architecture, LRRCT spans 142-184 (NSCTNQDGYRELVTEALPLLLDLDGQPVVERWISDEEDEASSD). Phosphoserine occurs at positions 175 and 182. Residues 201–221 (LKELEQELSRHREHRQQTALT) are a coiled coil. Residues 235–321 (DLPLLPGVPM…TKTTAKRSKK (87 aa)) form a disordered region.

The protein localises to the cell projection. The protein resides in the cilium. Its subcellular location is the flagellum. In terms of biological role, required for normal spermatogenesis and male fertility. Plays an important role in sperm flagellum biogenesis. The polypeptide is Leucine-rich repeat-containing protein 46 (LRRC46) (Homo sapiens (Human)).